The following is a 349-amino-acid chain: UDP-glucose 4-epimerase (349 aa).

NAD(+)-binding positions include 10–12 (GFI), 31–35 (DNFAN), 66–67 (DV), and Lys92. Residue 132 to 134 (SAT) participates in substrate binding. Tyr158 (proton acceptor) is an active-site residue. NAD(+)-binding residues include Lys162 and Tyr186. Substrate-binding positions include 186–188 (YFN), 207–209 (NNL), 225–227 (TIY), Arg240, and 303–306 (RPGD).

It belongs to the NAD(P)-dependent epimerase/dehydratase family. It depends on NAD(+) as a cofactor. Expressed in gonads, vulva, intestine, hypdermis and nervous system.

It catalyses the reaction UDP-alpha-D-glucose = UDP-alpha-D-galactose. It carries out the reaction UDP-N-acetyl-alpha-D-glucosamine = UDP-N-acetyl-alpha-D-galactosamine. The protein operates within carbohydrate metabolism; galactose metabolism. Functionally, catalyzes two distinct but analogous reactions: the reversible epimerization of UDP-glucose to UDP-galactose and the reversible epimerization of UDP-N-acetylglucosamine to UDP-N-acetylgalactosamine. The reaction with UDP-Gal plays a critical role in the Leloir pathway of galactose catabolism in which galactose is converted to the glycolytic intermediate glucose 6-phosphate. It contributes to the catabolism of dietary galactose and enables the endogenous biosynthesis of both UDP-Gal and UDP-GalNAc when exogenous sources are limited. Both UDP-sugar interconversions are important for the synthesis of glycoproteins and glycolipids. The chain is UDP-glucose 4-epimerase from Caenorhabditis elegans.